The chain runs to 157 residues: Ribosomal RNA large subunit methyltransferase H (157 aa).

Residues Leu-73, Gly-105, and 124–129 each bind S-adenosyl-L-methionine; that span reads MSKMTF.

It belongs to the RNA methyltransferase RlmH family. As to quaternary structure, homodimer.

Its subcellular location is the cytoplasm. The catalysed reaction is pseudouridine(1915) in 23S rRNA + S-adenosyl-L-methionine = N(3)-methylpseudouridine(1915) in 23S rRNA + S-adenosyl-L-homocysteine + H(+). Functionally, specifically methylates the pseudouridine at position 1915 (m3Psi1915) in 23S rRNA. In Bacteroides fragilis (strain ATCC 25285 / DSM 2151 / CCUG 4856 / JCM 11019 / LMG 10263 / NCTC 9343 / Onslow / VPI 2553 / EN-2), this protein is Ribosomal RNA large subunit methyltransferase H.